The following is a 423-amino-acid chain: Acetylornithine aminotransferase, mitochondrial (423 aa).

Residues 1–13 (MFKRYLSSTSSRR) constitute a mitochondrion transit peptide. Lys-276 bears the N6-(pyridoxal phosphate)lysine mark.

This sequence belongs to the class-III pyridoxal-phosphate-dependent aminotransferase family. Pyridoxal 5'-phosphate is required as a cofactor.

It is found in the mitochondrion matrix. The enzyme catalyses N(2)-acetyl-L-ornithine + 2-oxoglutarate = N-acetyl-L-glutamate 5-semialdehyde + L-glutamate. Its pathway is amino-acid biosynthesis; L-arginine biosynthesis; N(2)-acetyl-L-ornithine from L-glutamate: step 4/4. Functionally, catalyzes the conversion of N-acetylglutamate-gamma-semialdehyde (NAGSA) to N-acetylornithine in arginine biosynthesis. The sequence is that of Acetylornithine aminotransferase, mitochondrial (ARG8) from Saccharomyces cerevisiae (strain ATCC 204508 / S288c) (Baker's yeast).